The chain runs to 117 residues: Large ribosomal subunit protein eL34 (117 aa).

Phosphoserine is present on Ser12. The span at Ala16–Gln28 shows a compositional bias: polar residues. A disordered region spans residues Ala16–His35. Lys108 participates in a covalent cross-link: Glycyl lysine isopeptide (Lys-Gly) (interchain with G-Cter in SUMO2).

It belongs to the eukaryotic ribosomal protein eL34 family. As to quaternary structure, component of the large ribosomal subunit.

The protein localises to the cytoplasm. The protein resides in the cytosol. Its subcellular location is the endoplasmic reticulum. Functionally, component of the large ribosomal subunit. The ribosome is a large ribonucleoprotein complex responsible for the synthesis of proteins in the cell. This chain is Large ribosomal subunit protein eL34 (RPL34), found in Vicugna pacos (Alpaca).